Consider the following 542-residue polypeptide: Glucans biosynthesis protein G (542 aa).

A signal peptide spans 1–34 (MVSLLRCPSSKPYSSLICSLTLGAVVALSGVAYA).

Belongs to the OpgD/OpgG family.

The protein localises to the periplasm. Its pathway is glycan metabolism; osmoregulated periplasmic glucan (OPG) biosynthesis. Its function is as follows. Involved in the biosynthesis of osmoregulated periplasmic glucans (OPGs). This is Glucans biosynthesis protein G from Shewanella baltica (strain OS223).